A 297-amino-acid chain; its full sequence is N-acetylneuraminate lyase (297 aa).

The aceneuramate site is built by Ser-47 and Thr-48. The active-site Proton donor is the Tyr-137. Lys-165 (schiff-base intermediate with substrate) is an active-site residue. Positions 167, 189, 191, 192, and 208 each coordinate aceneuramate.

It belongs to the DapA family. NanA subfamily. As to quaternary structure, homotetramer.

Its subcellular location is the cytoplasm. It catalyses the reaction aceneuramate = aldehydo-N-acetyl-D-mannosamine + pyruvate. It participates in amino-sugar metabolism; N-acetylneuraminate degradation; D-fructose 6-phosphate from N-acetylneuraminate: step 1/5. Catalyzes the reversible aldol cleavage of N-acetylneuraminic acid (sialic acid; Neu5Ac) to form pyruvate and N-acetylmannosamine (ManNAc) via a Schiff base intermediate. This chain is N-acetylneuraminate lyase, found in Salmonella typhimurium (strain LT2 / SGSC1412 / ATCC 700720).